The sequence spans 587 residues: Estrogen receptor (587 aa).

The tract at residues 1–176 is modulating (transactivation AF-1); sequence MTLHTKTSGV…SMESTKETRY (176 aa). NR C4-type zinc fingers lie at residues 177–197 and 213–237; these read CAVC…CEGC and CPAT…LRKC. The nuclear receptor DNA-binding region spans 177–242; that stretch reads CAVCNDYASG…RLRKCYEVGM (66 aa). Positions 243 to 302 are hinge; the sequence is MKGGIRKDRRGGRVMKQKRQREEQDSRNGEASSTELRAPTLWASPLVVKHNKKNSPALSL. A disordered region spans residues 248 to 277; sequence RKDRRGGRVMKQKRQREEQDSRNGEASSTE. Basic residues predominate over residues 249–261; the sequence is KDRRGGRVMKQKR. In terms of domain architecture, NR LBD spans 303–539; it reads TAEQMVSALL…DLLLEMLDAH (237 aa). Residues 303–587 are transactivation AF-2; it reads TAEQMVSALL…KEEENMQNTL (285 aa).

Belongs to the nuclear hormone receptor family. NR3 subfamily. In terms of assembly, binds DNA as a homodimer. Can form a heterodimer with ER-beta.

The protein localises to the nucleus. Functionally, the steroid hormones and their receptors are involved in the regulation of eukaryotic gene expression and affect cellular proliferation and differentiation in target tissues. The sequence is that of Estrogen receptor (ESR1) from Taeniopygia guttata (Zebra finch).